A 389-amino-acid chain; its full sequence is Allantoicase (389 aa).

The protein belongs to the allantoicase family.

It catalyses the reaction allantoate + H2O = (S)-ureidoglycolate + urea. The protein operates within nitrogen metabolism; (S)-allantoin degradation; (S)-ureidoglycolate from allantoate (aminidohydrolase route): step 1/1. Utilization of purines as secondary nitrogen sources, when primary sources are limiting. The polypeptide is Allantoicase (allc) (Xenopus tropicalis (Western clawed frog)).